The chain runs to 413 residues: Exodeoxyribonuclease 7 large subunit (413 aa).

The protein belongs to the XseA family. As to quaternary structure, heterooligomer composed of large and small subunits.

It is found in the cytoplasm. It catalyses the reaction Exonucleolytic cleavage in either 5'- to 3'- or 3'- to 5'-direction to yield nucleoside 5'-phosphates.. In terms of biological role, bidirectionally degrades single-stranded DNA into large acid-insoluble oligonucleotides, which are then degraded further into small acid-soluble oligonucleotides. This chain is Exodeoxyribonuclease 7 large subunit, found in Corynebacterium efficiens (strain DSM 44549 / YS-314 / AJ 12310 / JCM 11189 / NBRC 100395).